The primary structure comprises 601 residues: Elongation factor 4 (601 aa).

One can recognise a tr-type G domain in the interval 7 to 189; sequence RNIRNFSIIA…AIVHRIPPPK (183 aa). GTP-binding positions include 19–24 and 136–139; these read DHGKST and NKID.

The protein belongs to the TRAFAC class translation factor GTPase superfamily. Classic translation factor GTPase family. LepA subfamily.

It localises to the cell inner membrane. The catalysed reaction is GTP + H2O = GDP + phosphate + H(+). Its function is as follows. Required for accurate and efficient protein synthesis under certain stress conditions. May act as a fidelity factor of the translation reaction, by catalyzing a one-codon backward translocation of tRNAs on improperly translocated ribosomes. Back-translocation proceeds from a post-translocation (POST) complex to a pre-translocation (PRE) complex, thus giving elongation factor G a second chance to translocate the tRNAs correctly. Binds to ribosomes in a GTP-dependent manner. The polypeptide is Elongation factor 4 (Xanthomonas campestris pv. campestris (strain ATCC 33913 / DSM 3586 / NCPPB 528 / LMG 568 / P 25)).